A 93-amino-acid polypeptide reads, in one-letter code: Exodeoxyribonuclease 7 small subunit (93 aa).

Positions 61 to 75 (IDDNGDEKVYEKQTD) are enriched in basic and acidic residues. The disordered stretch occupies residues 61–93 (IDDNGDEKVYEKQTDDPSNNGGGNRGFGSADEQ).

It belongs to the XseB family. Heterooligomer composed of large and small subunits.

The protein localises to the cytoplasm. The enzyme catalyses Exonucleolytic cleavage in either 5'- to 3'- or 3'- to 5'-direction to yield nucleoside 5'-phosphates.. In terms of biological role, bidirectionally degrades single-stranded DNA into large acid-insoluble oligonucleotides, which are then degraded further into small acid-soluble oligonucleotides. The protein is Exodeoxyribonuclease 7 small subunit of Limosilactobacillus reuteri (strain DSM 20016) (Lactobacillus reuteri).